The sequence spans 226 residues: Late expression factor 7 (226 aa).

The F-box domain occupies 9–58 (RAKRIRLPLEIIDTILQYLDPILHAKVVGLTTRVKCRLLRDNNVEDYLKL).

In terms of assembly, interacts with host S-phase kinase-associated protein 1/SKP1.

It is found in the host nucleus. The protein operates within protein degradation; proteasomal ubiquitin-dependent pathway. F-box protein that manipulates the host DNA damage response (DRR) in order to promote viral multiplication. Acts as a substrate recognition component of SKP1/Cullin/F-box (SCF) complexes for targeted protein polyubiquitination. This Lepidoptera (butterflies and moths) protein is Late expression factor 7 (LEF-7).